We begin with the raw amino-acid sequence, 274 residues long: Large ribosomal subunit protein uL2 (274 aa).

The segment at 223 to 264 is disordered; that stretch reads VAMNPVDHPHGGGEGRTSGGRHPVSPWGVPTKGYKTRSNKRT.

This sequence belongs to the universal ribosomal protein uL2 family. Part of the 50S ribosomal subunit. Forms a bridge to the 30S subunit in the 70S ribosome.

Functionally, one of the primary rRNA binding proteins. Required for association of the 30S and 50S subunits to form the 70S ribosome, for tRNA binding and peptide bond formation. It has been suggested to have peptidyltransferase activity; this is somewhat controversial. Makes several contacts with the 16S rRNA in the 70S ribosome. This chain is Large ribosomal subunit protein uL2, found in Shewanella denitrificans (strain OS217 / ATCC BAA-1090 / DSM 15013).